A 101-amino-acid polypeptide reads, in one-letter code: Large ribosomal subunit protein bL20 (101 aa).

This sequence belongs to the bacterial ribosomal protein bL20 family.

In terms of biological role, binds directly to 23S ribosomal RNA and is necessary for the in vitro assembly process of the 50S ribosomal subunit. It is not involved in the protein synthesizing functions of that subunit. The polypeptide is Large ribosomal subunit protein bL20 (rplT) (Carsonella ruddii (strain PV)).